We begin with the raw amino-acid sequence, 87 residues long: Omega-lycotoxin-Am1d (87 aa).

Residues 1–17 (MKLSIFFVLFFIAIAYC) form the signal peptide. Positions 18–40 (QPEFLDDEEDEVEETLPVAEEGR) are excised as a propeptide. 4 disulfides stabilise this stretch: cysteine 44-cysteine 59, cysteine 51-cysteine 64, cysteine 58-cysteine 84, and cysteine 66-cysteine 82.

Belongs to the neurotoxin omega-lctx family. In terms of tissue distribution, expressed by the venom gland.

It localises to the secreted. Its function is as follows. Modulates Cav2.1/CACNA1A voltage-gated calcium channels (P/Q-type currents) in rat cerebellar Purkinje cells and hippocampal CA1-CA3 neurons. At saturating concentrations (&gt;10 nM) decelerates activation kinetics and slightly increases peak amplitude without affecting deactivation kinetics. In vivo, does not cause death when intravenously injected into mice. In rat models, through its activity on Cav2.1/CACNA1A, has an ameliorative effect on memory defects provoked by hyperstimulation of N-methyl-D-aspartate receptors (NMDARs) in the hippocampus. The polypeptide is Omega-lycotoxin-Am1d (Alopecosa marikovskyi (Wolf spider)).